A 247-amino-acid polypeptide reads, in one-letter code: Trypsin (247 aa).

Residues 1–21 form the signal peptide; that stretch reads LTTVISYFALVAFALVGVSYA. Positions 22-30 are cleaved as a propeptide — activation peptide; sequence TPKASINGR. The region spanning 31 to 247 is the Peptidase S1 domain; it reads IVGGEMTDIS…QSNFPGVYGI (217 aa). Cys-61 and Cys-77 form a disulfide bridge. Catalysis depends on charge relay system residues His-76 and Asp-120. 2 disulfides stabilise this stretch: Cys-185–Cys-201 and Cys-212–Cys-236. The Charge relay system role is filled by Ser-216.

It belongs to the peptidase S1 family. In terms of tissue distribution, midgut.

The protein resides in the secreted. The protein localises to the extracellular space. The enzyme catalyses Preferential cleavage: Arg-|-Xaa, Lys-|-Xaa.. This chain is Trypsin, found in Simulium vittatum (Striped black fly).